The sequence spans 418 residues: NADH-quinone oxidoreductase subunit D (418 aa).

The protein belongs to the complex I 49 kDa subunit family. As to quaternary structure, NDH-1 is composed of 14 different subunits. Subunits NuoB, C, D, E, F, and G constitute the peripheral sector of the complex.

The protein resides in the cell inner membrane. The enzyme catalyses a quinone + NADH + 5 H(+)(in) = a quinol + NAD(+) + 4 H(+)(out). NDH-1 shuttles electrons from NADH, via FMN and iron-sulfur (Fe-S) centers, to quinones in the respiratory chain. The immediate electron acceptor for the enzyme in this species is believed to be ubiquinone. Couples the redox reaction to proton translocation (for every two electrons transferred, four hydrogen ions are translocated across the cytoplasmic membrane), and thus conserves the redox energy in a proton gradient. The polypeptide is NADH-quinone oxidoreductase subunit D (Neisseria meningitidis serogroup C (strain 053442)).